We begin with the raw amino-acid sequence, 425 residues long: CinA-like protein (425 aa).

The protein belongs to the CinA family.

The chain is CinA-like protein from Desulfovibrio desulfuricans (strain ATCC 27774 / DSM 6949 / MB).